The primary structure comprises 723 residues: Envelope glycoprotein H (723 aa).

Residues 1–23 (MSPATRFTVISCLVVSLITPSET) form the signal peptide. The Virion surface portion of the chain corresponds to 24–700 (SSWFDPFIEW…IIDIRQTSIF (677 aa)). 4 N-linked (GlcNAc...) asparagine; by host glycosylation sites follow: Asn-39, Asn-45, Asn-144, and Asn-174. The interval 197 to 263 (HQFAIVLTFT…QSYRDDLLIV (67 aa)) is interaction with gL. Residues Asn-270, Asn-340, Asn-411, Asn-543, Asn-621, and Asn-681 are each glycosylated (N-linked (GlcNAc...) asparagine; by host). Residues 701–721 (MIMLYCSLGVLLLYGLYRLLH) traverse the membrane as a helical segment. The Intravirion portion of the chain corresponds to 722-723 (MI).

The protein belongs to the herpesviridae glycoprotein H family. In terms of assembly, interacts with glycoprotein L (gL); this interaction is necessary for the correct processing and cell surface expression of gH. The heterodimer gH/gL seems to interact with gB trimers during fusion. N-glycosylated, O-glycosylated, and sialylated.

The protein resides in the virion membrane. It is found in the host cell membrane. It localises to the host endosome membrane. The heterodimer glycoprotein H-glycoprotein L is required for the fusion of viral and plasma membranes leading to virus entry into the host cell. Following initial binding to host receptor, membrane fusion is mediated by the fusion machinery composed of gB and the heterodimer gH/gL. May also be involved in the fusion between the virion envelope and the outer nuclear membrane during virion morphogenesis. This is Envelope glycoprotein H from Guinea pig cytomegalovirus (strain 22122) (GPCMV).